Consider the following 246-residue polypeptide: tRNA (guanine-N(7)-)-methyltransferase (246 aa).

Positions 1 to 26 are disordered; the sequence is MSDSSSSSENAPATPESPGRPPRGIK. S-adenosyl-L-methionine contacts are provided by E74, E99, D126, and D149. The active site involves D149. Substrate contacts are provided by residues K153, D185, and 224–227; that span reads TKFE.

The protein belongs to the class I-like SAM-binding methyltransferase superfamily. TrmB family.

It carries out the reaction guanosine(46) in tRNA + S-adenosyl-L-methionine = N(7)-methylguanosine(46) in tRNA + S-adenosyl-L-homocysteine. It functions in the pathway tRNA modification; N(7)-methylguanine-tRNA biosynthesis. Functionally, catalyzes the formation of N(7)-methylguanine at position 46 (m7G46) in tRNA. This chain is tRNA (guanine-N(7)-)-methyltransferase, found in Chromohalobacter salexigens (strain ATCC BAA-138 / DSM 3043 / CIP 106854 / NCIMB 13768 / 1H11).